The sequence spans 232 residues: Uracil phosphoribosyltransferase (232 aa).

38 to 42 (KGLVK) provides a ligand contact to GTP. 5-phospho-alpha-D-ribose 1-diphosphate-binding positions include R87, R112, and 140–148 (DPMIATGST). Uracil contacts are provided by residues I204 and 209–211 (GDA). 5-phospho-alpha-D-ribose 1-diphosphate is bound at residue D210.

This sequence belongs to the UPRTase family. Requires Mg(2+) as cofactor.

It carries out the reaction UMP + diphosphate = 5-phospho-alpha-D-ribose 1-diphosphate + uracil. The protein operates within pyrimidine metabolism; UMP biosynthesis via salvage pathway; UMP from uracil: step 1/1. Allosterically activated by GTP. Catalyzes the conversion of uracil and 5-phospho-alpha-D-ribose 1-diphosphate (PRPP) to UMP and diphosphate. This is Uracil phosphoribosyltransferase from Pyrococcus furiosus (strain ATCC 43587 / DSM 3638 / JCM 8422 / Vc1).